The chain runs to 329 residues: MQGSVTEFLKPHLVDIEQISSTHAKVILEPLERGFGHTLGNALRRILLSSMPGCAVTEVEIEGVLHEYSSKEGVQEDILEVLLNLKGLAVKVQNKDDVFLTLNKSGIGPVVAGDITHDGDVEIVNPEHVICHLTDENASISMRIRVQRGRGYVPASARAHSQDEERPIGRLLVDACYSPVDRIAYNVEAARVEQRTDLDKLVIELETNGTLDPEEAIRRAATILAEQLDAFVDLRDVRQPEVKEEKPEFDPILLRPVDDLELTVRSANCLKAETIHYIGDLVQRTEVELLKTPNLGKKSLTEIKDVLASRGLSLGMRLDNWPPASIAED.

Residues 1–235 are alpha N-terminal domain (alpha-NTD); the sequence is MQGSVTEFLK…EQLDAFVDLR (235 aa). Residues 249-329 form an alpha C-terminal domain (alpha-CTD) region; it reads FDPILLRPVD…NWPPASIAED (81 aa).

Belongs to the RNA polymerase alpha chain family. Homodimer. The RNAP catalytic core consists of 2 alpha, 1 beta, 1 beta' and 1 omega subunit. When a sigma factor is associated with the core the holoenzyme is formed, which can initiate transcription.

It carries out the reaction RNA(n) + a ribonucleoside 5'-triphosphate = RNA(n+1) + diphosphate. Its function is as follows. DNA-dependent RNA polymerase catalyzes the transcription of DNA into RNA using the four ribonucleoside triphosphates as substrates. In Actinobacillus succinogenes (strain ATCC 55618 / DSM 22257 / CCUG 43843 / 130Z), this protein is DNA-directed RNA polymerase subunit alpha.